Consider the following 1135-residue polypeptide: Envelopment polyprotein (1135 aa).

Positions Met1–Thr18 are cleaved as a signal peptide. Residues Leu19–Ala485 are Lumenal-facing. 11 cysteine pairs are disulfide-bonded: Cys29-Cys151, Cys63-Cys157, Cys109-Cys128, Cys133-Cys138, Cys175-Cys185, Cys210-Cys247, Cys234-Cys351, Cys376-Cys435, Cys380-Cys389, Cys405-Cys424, and Cys452-Cys475. Asn134 is a glycosylation site (N-linked (GlcNAc...) asparagine; by host). N-linked (GlcNAc...) asparagine; by host glycosylation is found at Asn235 and Asn347. Residue Asn399 is glycosylated (N-linked (GlcNAc...) asparagine; by host). A helical transmembrane segment spans residues Ala486–Leu506. Residues Thr507 to Cys627 are Cytoplasmic-facing. Residues Phe516–Lys533 form a binding to the ribonucleoprotein region. 2 CCHC-type zinc fingers span residues Cys545–Cys565 and Cys570–Cys591. 3 binding to the ribonucleoprotein regions span residues Tyr588 to Val605, Gln592 to Lys603, and Thr611 to Ser625. The ITAM domain maps to Thr611–Ile634. The YxxL motif lies at Tyr615–Leu618. The chain crosses the membrane as a helical span at residues Tyr628–Ala648. The Lumenal segment spans residues Ser649–Asn1105. 8 cysteine pairs are disulfide-bonded: Cys735-Cys770, Cys739-Cys777, Cys751-Cys885, Cys765-Cys896, Cys780-Cys904, Cys806-Cys815, Cys823-Cys832, and Cys863-Cys867. Residues Tyr757–Cys777 are fusion loop. A glycan (N-linked (GlcNAc...) asparagine; by host) is linked at Asn928. 5 disulfides stabilise this stretch: Cys970–Cys1000, Cys993–Cys1045, Cys1010–Cys1015, Cys1046–Cys1051, and Cys1085–Cys1089. The helical transmembrane segment at Trp1106–Leu1126 threads the bilayer. The interval Leu1122–Ser1135 is binding to the ribonucleoprotein. The Cytoplasmic portion of the chain corresponds to Cys1127–Ser1135.

The protein belongs to the hantavirus envelope glycoprotein family. In terms of assembly, homodimer. Homotetramer; forms heterotetrameric Gn-Gc spikes in the pre-fusion conformation. Interacts (via C-terminus) with the nucleoprotein. Interacts with host TUFM; this interaction contributes to the virus-induced degradation of mitochondria by autophagy, which leads to degradation of host MAVS and inhibition of type I interferon (IFN) responses. Interacts with host MAP1LC3B; this interaction contributes to the virus-induced degradation of mitochondria by autophagy, which leads to degradation of host MAVS and inhibition of type I interferon (IFN) responses. Homodimer. Homotetramer; forms heterotetrameric Gn-Gc spikes in the pre-fusion conformation. Homotrimer; forms homotrimer in the post-fusion conformation at acidic pH. Interacts (via C-terminus) with the nucleoprotein. In terms of processing, envelope polyprotein precursor is quickly cleaved in vivo just after synthesis, presumably by host signal peptidase.

It is found in the virion membrane. Its subcellular location is the host cell surface. The protein localises to the host Golgi apparatus membrane. It localises to the host endoplasmic reticulum membrane. The protein resides in the host mitochondrion. Functionally, forms homotetramers with glycoprotein C at the surface of the virion. Attaches the virion to host cell receptors including integrin ITGAV/ITGB3. This attachment induces virion internalization predominantly through clathrin-dependent endocytosis. May also bind to host C1QBP for virus entry into the host cell. Mediates the assembly and budding of infectious virus particles through its interaction with the nucleocapsid protein and the viral genome. May dysregulate normal immune and endothelial cell responses through an ITAM motif. Translocates to mitochondria, binds to host TUFM and recruits MAP1LC3B. These interactions induce mitochondrial autophagy and therefore destruction of host MAVS leading to inhibition of type I interferon (IFN) responses. Concomitant breakdown of glycoprotein N is apparently prevented by the nucleoprotein that may inhibit Gn-stimulated autophagosome-lysosome fusion. Interacts with the viral genomic RNA. Its function is as follows. Forms homotetramers with glycoprotein N at the surface of the virion. Attaches the virion to host cell receptors including integrin ITGAV/ITGB3. This attachment induces virion internalization predominantly through clathrin-dependent endocytosis. May also bind to host C1QBP for virus entry into the host cell. Class II fusion protein that promotes fusion of viral membrane with host endosomal membrane after endocytosis of the virion. This Hantaan virus (strain Lee) (Lee virus) protein is Envelopment polyprotein (GP).